The primary structure comprises 335 residues: Glycerol-3-phosphate dehydrogenase [NAD(P)+] (335 aa).

3 residues coordinate NADPH: tryptophan 14, arginine 33, and lysine 111. Positions 111, 140, and 142 each coordinate sn-glycerol 3-phosphate. NADPH is bound at residue alanine 144. Sn-glycerol 3-phosphate-binding residues include lysine 195, aspartate 248, serine 258, arginine 259, and asparagine 260. Catalysis depends on lysine 195, which acts as the Proton acceptor. An NADPH-binding site is contributed by arginine 259. The NADPH site is built by valine 283 and glutamate 285.

Belongs to the NAD-dependent glycerol-3-phosphate dehydrogenase family.

The protein localises to the cytoplasm. The catalysed reaction is sn-glycerol 3-phosphate + NAD(+) = dihydroxyacetone phosphate + NADH + H(+). It catalyses the reaction sn-glycerol 3-phosphate + NADP(+) = dihydroxyacetone phosphate + NADPH + H(+). The protein operates within membrane lipid metabolism; glycerophospholipid metabolism. Catalyzes the reduction of the glycolytic intermediate dihydroxyacetone phosphate (DHAP) to sn-glycerol 3-phosphate (G3P), the key precursor for phospholipid synthesis. The polypeptide is Glycerol-3-phosphate dehydrogenase [NAD(P)+] (Burkholderia mallei (strain NCTC 10247)).